The primary structure comprises 598 residues: uncharacterized protein (598 aa).

Positions 397, 408, 506, and 520 each coordinate Mn(2+).

The protein belongs to the peptidase M24B family. The cofactor is Mn(2+).

This is an uncharacterized protein from Schizosaccharomyces pombe (strain 972 / ATCC 24843) (Fission yeast).